Consider the following 328-residue polypeptide: Probable transcription factor At4g00610 (328 aa).

The tract at residues 31–143 (AKNKTLVTPS…ERAKTETETG (113 aa)) is disordered. Over residues 35-54 (TLVTPSTVKKSSDVASTSKK) the composition is skewed to polar residues. The segment covering 84–108 (SEEEEEDEPSSDSESGSESESDTEA) has biased composition (acidic residues). The span at 122 to 143 (NEKRQSEGKPEEERAKTETETG) shows a compositional bias: basic and acidic residues.

This sequence belongs to the GeBP family.

The polypeptide is Probable transcription factor At4g00610 (Arabidopsis thaliana (Mouse-ear cress)).